The following is a 240-amino-acid chain: Pyridoxine 5'-phosphate synthase (240 aa).

Residue N7 participates in 3-amino-2-oxopropyl phosphate binding. 9–10 (DH) is a binding site for 1-deoxy-D-xylulose 5-phosphate. R18 contributes to the 3-amino-2-oxopropyl phosphate binding site. Residue H43 is the Proton acceptor of the active site. 1-deoxy-D-xylulose 5-phosphate contacts are provided by R45 and H50. The active-site Proton acceptor is E70. T100 is a binding site for 1-deoxy-D-xylulose 5-phosphate. H191 acts as the Proton donor in catalysis. 3-amino-2-oxopropyl phosphate is bound by residues G192 and 213–214 (GH).

Belongs to the PNP synthase family. As to quaternary structure, homooctamer; tetramer of dimers.

It is found in the cytoplasm. It carries out the reaction 3-amino-2-oxopropyl phosphate + 1-deoxy-D-xylulose 5-phosphate = pyridoxine 5'-phosphate + phosphate + 2 H2O + H(+). It functions in the pathway cofactor biosynthesis; pyridoxine 5'-phosphate biosynthesis; pyridoxine 5'-phosphate from D-erythrose 4-phosphate: step 5/5. In terms of biological role, catalyzes the complicated ring closure reaction between the two acyclic compounds 1-deoxy-D-xylulose-5-phosphate (DXP) and 3-amino-2-oxopropyl phosphate (1-amino-acetone-3-phosphate or AAP) to form pyridoxine 5'-phosphate (PNP) and inorganic phosphate. This is Pyridoxine 5'-phosphate synthase from Cyanothece sp. (strain PCC 7425 / ATCC 29141).